Here is a 288-residue protein sequence, read N- to C-terminus: N-acetylneuraminate lyase (288 aa).

Residues S44 and T45 each contribute to the aceneuramate site. Y133 (proton donor) is an active-site residue. K161 functions as the Schiff-base intermediate with substrate in the catalytic mechanism. Aceneuramate-binding residues include T163, G185, D187, E188, and S204.

This sequence belongs to the DapA family. NanA subfamily. As to quaternary structure, homotetramer.

It localises to the cytoplasm. The enzyme catalyses aceneuramate = aldehydo-N-acetyl-D-mannosamine + pyruvate. The protein operates within amino-sugar metabolism; N-acetylneuraminate degradation; D-fructose 6-phosphate from N-acetylneuraminate: step 1/5. Functionally, catalyzes the reversible aldol cleavage of N-acetylneuraminic acid (sialic acid; Neu5Ac) to form pyruvate and N-acetylmannosamine (ManNAc) via a Schiff base intermediate. The polypeptide is N-acetylneuraminate lyase (Clostridium perfringens (strain SM101 / Type A)).